The following is a 376-amino-acid chain: Putative glutamate--cysteine ligase 2-1 (376 aa).

Belongs to the glutamate--cysteine ligase type 2 family. YbdK subfamily.

It carries out the reaction L-cysteine + L-glutamate + ATP = gamma-L-glutamyl-L-cysteine + ADP + phosphate + H(+). ATP-dependent carboxylate-amine ligase which exhibits weak glutamate--cysteine ligase activity. This is Putative glutamate--cysteine ligase 2-1 from Rubrobacter xylanophilus (strain DSM 9941 / JCM 11954 / NBRC 16129 / PRD-1).